The following is a 156-amino-acid chain: MRNPAKQEDLIKAFKALLKEEKFSSQGEIVLALQEEGFENINQSKVSRMLTKFGAVRTRNAKMEMVYCLPAELGVPTTSSPLKNLVLDVDYNDSVVVINTSPGAAQLIARLLDSLGKAEGILGSIAGDDTIFTTPARGFTVEQLHEAILRLFEQEL.

Belongs to the ArgR family.

It localises to the cytoplasm. Its pathway is amino-acid biosynthesis; L-arginine biosynthesis [regulation]. In terms of biological role, regulates arginine biosynthesis genes. The chain is Arginine repressor from Yersinia enterocolitica serotype O:8 / biotype 1B (strain NCTC 13174 / 8081).